Reading from the N-terminus, the 402-residue chain is Phosphopentomutase (402 aa).

Asp-10, Asp-301, His-306, Asp-342, His-343, and His-354 together coordinate Mn(2+).

This sequence belongs to the phosphopentomutase family. The cofactor is Mn(2+).

It localises to the cytoplasm. It carries out the reaction 2-deoxy-alpha-D-ribose 1-phosphate = 2-deoxy-D-ribose 5-phosphate. The enzyme catalyses alpha-D-ribose 1-phosphate = D-ribose 5-phosphate. Its pathway is carbohydrate degradation; 2-deoxy-D-ribose 1-phosphate degradation; D-glyceraldehyde 3-phosphate and acetaldehyde from 2-deoxy-alpha-D-ribose 1-phosphate: step 1/2. Its function is as follows. Isomerase that catalyzes the conversion of deoxy-ribose 1-phosphate (dRib-1-P) and ribose 1-phosphate (Rib-1-P) to deoxy-ribose 5-phosphate (dRib-5-P) and ribose 5-phosphate (Rib-5-P), respectively. This Aeromonas hydrophila subsp. hydrophila (strain ATCC 7966 / DSM 30187 / BCRC 13018 / CCUG 14551 / JCM 1027 / KCTC 2358 / NCIMB 9240 / NCTC 8049) protein is Phosphopentomutase.